The primary structure comprises 211 residues: Histidine biosynthesis bifunctional protein HisIE (211 aa).

Positions 1-107 (MNKLIDFSKG…FNSEIESRFK (107 aa)) are phosphoribosyl-AMP cyclohydrolase. A phosphoribosyl-ATP pyrophosphohydrolase region spans residues 108–211 (IQALAQTIHQ…KGERKKVQEW (104 aa)).

In the N-terminal section; belongs to the PRA-CH family. This sequence in the C-terminal section; belongs to the PRA-PH family.

The protein localises to the cytoplasm. It catalyses the reaction 1-(5-phospho-beta-D-ribosyl)-ATP + H2O = 1-(5-phospho-beta-D-ribosyl)-5'-AMP + diphosphate + H(+). The catalysed reaction is 1-(5-phospho-beta-D-ribosyl)-5'-AMP + H2O = 1-(5-phospho-beta-D-ribosyl)-5-[(5-phospho-beta-D-ribosylamino)methylideneamino]imidazole-4-carboxamide. Its pathway is amino-acid biosynthesis; L-histidine biosynthesis; L-histidine from 5-phospho-alpha-D-ribose 1-diphosphate: step 2/9. The protein operates within amino-acid biosynthesis; L-histidine biosynthesis; L-histidine from 5-phospho-alpha-D-ribose 1-diphosphate: step 3/9. The protein is Histidine biosynthesis bifunctional protein HisIE of Staphylococcus epidermidis (strain ATCC 12228 / FDA PCI 1200).